The following is a 249-amino-acid chain: Small ribosomal subunit protein uS3 (249 aa).

The KH type-2 domain occupies 23-94 (LNEFFTRELS…TVELYAEKVQ (72 aa)). Phosphoserine is present on residues Ser-32, Ser-37, Ser-106, and Ser-141.

This sequence belongs to the universal ribosomal protein uS3 family. As to quaternary structure, component of the small ribosomal subunit (SSU). Mature yeast ribosomes consist of a small (40S) and a large (60S) subunit. The 40S small subunit contains 1 molecule of ribosomal RNA (18S rRNA) and at least 33 different proteins. The large 60S subunit contains 3 rRNA molecules (25S, 5.8S and 5S rRNA) and at least 46 different proteins.

The protein localises to the cytoplasm. Its function is as follows. Component of the ribosome, a large ribonucleoprotein complex responsible for the synthesis of proteins in the cell. The small ribosomal subunit (SSU) binds messenger RNAs (mRNAs) and translates the encoded message by selecting cognate aminoacyl-transfer RNA (tRNA) molecules. The large subunit (LSU) contains the ribosomal catalytic site termed the peptidyl transferase center (PTC), which catalyzes the formation of peptide bonds, thereby polymerizing the amino acids delivered by tRNAs into a polypeptide chain. The nascent polypeptides leave the ribosome through a tunnel in the LSU and interact with protein factors that function in enzymatic processing, targeting, and the membrane insertion of nascent chains at the exit of the ribosomal tunnel. The polypeptide is Small ribosomal subunit protein uS3 (rps3) (Schizosaccharomyces pombe (strain 972 / ATCC 24843) (Fission yeast)).